The following is a 174-amino-acid chain: Eukaryotic translation elongation factor 1 epsilon-1 (174 aa).

N-acetylalanine is present on alanine 2. An N-terminal region spans residues 2 to 56 (AAAAELSLLEKSLGLSKGNKYSAQGERQIPVLQTNNGPSLTGLTTIAAHLVKQAN). A GST C-terminal domain is found at 50–173 (HLVKQANKEY…FIKNRLYTNS (124 aa)). The linker stretch occupies residues 57–63 (KEYLLGS). The C-terminal stretch occupies residues 64-152 (TAEEKAIVQQ…SRWFCHIQHY (89 aa)). Lysine 138 bears the N6-acetyllysine mark. Residues 153–169 (PGIRQHLSSVVFIKNRL) adopt a coiled-coil conformation.

As to quaternary structure, part of a multisubunit complex that groups tRNA ligases for Arg (RARS1), Asp (DARS1), Gln (QARS1), Ile (IARS1), Leu (LARS1), Lys (KARS1), Met (MARS1) the bifunctional ligase for Glu and Pro (EPRS1) and the auxiliary subunits AIMP1/p43, AIMP2/p38 and EEF1E1/p18. Can interact simultaneously with MARS1 and EPRS1. Forms a linear complex that contains MARS1, EEF1E1, EPRS1 and AIMP2 that is at the core of the multisubunit complex. Interacts with ATM and ATR. The interaction with ATM, which takes place independently of TP53, is induced by DNA damage that may occur during genotoxic stress or cell growth. The interaction with ATR is enhanced by UV irradiation. As to expression, down-regulated in various cancer tissues.

It localises to the cytoplasm. It is found in the cytosol. Its subcellular location is the nucleus. Functionally, positive modulator of ATM response to DNA damage. This Homo sapiens (Human) protein is Eukaryotic translation elongation factor 1 epsilon-1 (EEF1E1).